A 236-amino-acid polypeptide reads, in one-letter code: Endo-1,4-beta-xylanase 3 (236 aa).

The N-terminal stretch at Met1–Arg45 is a signal peptide. Residues Asn39 and Asn106 are each glycosylated (N-linked (GlcNAc...) asparagine). In terms of domain architecture, GH11 spans Gly46 to Arg236. Catalysis depends on Glu131, which acts as the Nucleophile. The active-site Proton donor is the Glu223.

This sequence belongs to the glycosyl hydrolase 11 (cellulase G) family.

The protein resides in the secreted. The catalysed reaction is Endohydrolysis of (1-&gt;4)-beta-D-xylosidic linkages in xylans.. The protein operates within glycan degradation; xylan degradation. Its function is as follows. Endo-1,4-beta-xylanase involved in the hydrolysis of xylan, a major structural heterogeneous polysaccharide found in plant biomass representing the second most abundant polysaccharide in the biosphere, after cellulose. The protein is Endo-1,4-beta-xylanase 3 (XYL3) of Pyricularia grisea (Crabgrass-specific blast fungus).